The chain runs to 448 residues: MICNRLWGDQTESSLKFFNISTEKMPWELIKALAQIKRVSAQVNYDLKLLDYERSQAIIAAVDEILSGNHKNEFPLSVWQTGSGTQSNMNMNEVLANRANELLRKNQINIVVHPNDHVNKSQSSNDVFPSAMHIAAVVNLKTKLIPVIKLLQKTFLKKSIEFRNIIKIGRTHLQDAIPLTLGQEISGWDFMLKNNTNHIQSTILDLSALALGGTAVGTGFSAHVEYAERVVLGLSKLIHHSFFSAPNKFESLSTCDAIVYSHGTLKGLAISMMKIANDIRLLSSGPQCGLGELIIPANEPGSSIMPGKVNPTQCESMTMSCCQVMGNDLSISLGGSSGQLQLNTYRPLIIYNFLQSIRLLTDSIKNFHDYCIVGIRPKFKRIEKLLNKSLMLVTALSSHIGYDKSAQIAQTAYLNGITLKAASIQSGYVTEKQFDDWVCPENMIYPDM.

Substrate is bound by residues 83–85 (SGT), 113–116 (HPND), 123–125 (SSN), and T171. The Proton donor/acceptor role is filled by H172. The active site involves S302. Substrate is bound by residues S303 and 308–310 (KVN).

This sequence belongs to the class-II fumarase/aspartase family. Fumarase subfamily. In terms of assembly, homotetramer.

The protein localises to the cytoplasm. It carries out the reaction (S)-malate = fumarate + H2O. The protein operates within carbohydrate metabolism; tricarboxylic acid cycle; (S)-malate from fumarate: step 1/1. Involved in the TCA cycle. Catalyzes the stereospecific interconversion of fumarate to L-malate. In Blochmanniella floridana, this protein is Fumarate hydratase class II.